The following is a 69-amino-acid chain: Large ribosomal subunit protein bL32c (69 aa).

This sequence belongs to the bacterial ribosomal protein bL32 family.

It is found in the plastid. The protein resides in the chloroplast. In Pelargonium hortorum (Common geranium), this protein is Large ribosomal subunit protein bL32c.